Reading from the N-terminus, the 1036-residue chain is Putative GPI-anchored protein pfl2 (1036 aa).

The signal sequence occupies residues 1–23 (MKFFTASTLFLLAAQSLNSGVSA). 25 N-linked (GlcNAc...) asparagine glycosylation sites follow: asparagine 66, asparagine 97, asparagine 165, asparagine 201, asparagine 233, asparagine 259, asparagine 277, asparagine 296, asparagine 312, asparagine 331, asparagine 347, asparagine 363, asparagine 379, asparagine 395, asparagine 410, asparagine 429, asparagine 445, asparagine 461, asparagine 477, asparagine 493, asparagine 509, asparagine 524, asparagine 543, asparagine 559, and asparagine 573. Disordered stretches follow at residues 88-130 (SSSL…SSLA) and 147-183 (SSLA…SLSS). Low complexity predominate over residues 243 to 585 (SSISSTVSSS…ITSSASGSTG (343 aa)). The interval 243–710 (SSISSTVSSS…PLSNSTVAPT (468 aa)) is disordered. The segment covering 586–595 (EFTNTNSGNG) has biased composition (polar residues). Residues 597 to 630 (VSGSVTTPTSTPLSNSTVAPTSTFTSSGFNTTSG) show a composition bias toward low complexity. N-linked (GlcNAc...) asparagine glycans are attached at residues asparagine 611, asparagine 626, asparagine 642, asparagine 657, asparagine 673, asparagine 688, asparagine 704, asparagine 719, and asparagine 735. Over residues 631-647 (LPTSSASTPLSNSTVAP) the composition is skewed to polar residues. Low complexity predominate over residues 648 to 692 (TSTFTSSGFNTTSGLPTSSASTPSSNSSIVPTSTFTSSGFNTTSG). Over residues 693–709 (LPTSSASTPLSNSTVAP) the composition is skewed to polar residues. Low complexity-rich tracts occupy residues 722–831 (SGLP…TTAS), 838–862 (PTAA…ATYT), and 885–906 (IPVN…SFTP). Disordered regions lie at residues 722–862 (SGLP…ATYT) and 885–918 (IPVN…SYSN). N-linked (GlcNAc...) asparagine glycosylation is found at asparagine 918, asparagine 924, asparagine 930, asparagine 933, asparagine 939, asparagine 947, and asparagine 977. The tract at residues 978–1011 (TTATSGSDDDVKTASTSSSTSYTSSSSSSSSTTS) is disordered. The segment covering 990–1011 (TASTSSSTSYTSSSSSSSSTTS) has biased composition (low complexity). Serine 1011 carries the GPI-anchor amidated serine lipid modification. A propeptide spans 1012-1036 (AASSKASVSMGLNGLMIAAVILLVA) (removed in mature form).

The protein resides in the cell membrane. Functionally, may be involved in agglutination during conjugation or other aspects of colony formation. Induces flocculation when overexpressed. This is Putative GPI-anchored protein pfl2 from Schizosaccharomyces pombe (strain 972 / ATCC 24843) (Fission yeast).